Consider the following 1015-residue polypeptide: Frequency clock protein (1015 aa).

8 disordered regions span residues 1 to 138, 183 to 285, 352 to 383, 402 to 465, 544 to 614, 629 to 668, 706 to 728, and 895 to 1015; these read MQPT…SADD, KRKK…QKVD, DFSP…TFSS, HVAG…DPDR, GRKI…VSAS, SPNE…NRRK, ERPD…GSSI, and SEDD…SSQG. Low complexity predominate over residues 49–68; sequence SAPPNDSNENSSSPRRASSG. The segment covering 69 to 80 has biased composition (basic and acidic residues); sequence ESHETGQSDAKK. Residues 82–95 show a composition bias toward polar residues; sequence FNQSNQNPTATFDS. Over residues 107–117 the composition is skewed to basic and acidic residues; sequence KESDSSNEDKP. Low complexity-rich tracts occupy residues 203–216, 228–267, and 356–368; these read SPNT…STTK, SGSG…SGTS, and QQQQ…QQQQ. Over residues 369-383 the composition is skewed to polar residues; it reads PKSNFITNPGATFSS. The span at 431-442 shows a compositional bias: low complexity; sequence NSSSNGNDSGTN. Positions 443–453 are enriched in pro residues; the sequence is PSPPMPPPPEQ. A compositionally biased stretch (basic and acidic residues) spans 454–465; sequence RPTRPRDLDPDR. A compositionally biased stretch (polar residues) spans 556–570; that stretch reads TKFSSESSGDLSQRS. Residues 584-588 carry the Nuclear localization signal motif; sequence HKRQK. Low complexity predominate over residues 590–600; sequence GHSTGDSGSSG. The span at 629 to 643 shows a compositional bias: polar residues; that stretch reads SPNEQSSMEDGTLSS. Acidic residues-rich tracts occupy residues 895 to 909 and 934 to 946; these read SEDD…EFNS and SGDE…EDDI. The segment covering 976-1003 has biased composition (low complexity); sequence GSSRGRSNSASAEAVLRAGGSSAATAGG.

This sequence belongs to the FRQ family.

Its subcellular location is the nucleus. In terms of biological role, circadian clock component involved in the generation of biological rhythms, in particular in rhythm stability, period length, and temperature compensation. Behaves as a negative element in circadian transcriptional loop. The polypeptide is Frequency clock protein (FRQ) (Trichoderma spinulosum (Hypocrea spinulosa)).